The sequence spans 31 residues: U2-theraphotoxin-Hhn1a (31 aa).

Intrachain disulfides connect cysteine 2–cysteine 14, cysteine 7–cysteine 19, and cysteine 13–cysteine 26.

In terms of tissue distribution, expressed by the venom gland.

It is found in the secreted. Its function is as follows. Agglutinates erythrocytes. The protein is U2-theraphotoxin-Hhn1a of Cyriopagopus hainanus (Chinese bird spider).